A 200-amino-acid chain; its full sequence is Charged multivesicular body protein 6-B (200 aa).

A lipid anchor (N-myristoyl glycine) is attached at Gly-2. The stretch at Arg-9–Glu-102 forms a coiled coil. Residues Gln-165–Ser-200 form a disordered region. The short motif at Leu-168–Ser-179 is the Type-2 MIT-interacting motif element.

Belongs to the SNF7 family. Probable core component of the endosomal sorting required for transport complex III (ESCRT-III). ESCRT-III components are thought to multimerize to form a flat lattice on the perimeter membrane of the endosome.

It localises to the endomembrane system. It is found in the late endosome membrane. Functionally, probable core component of the endosomal sorting required for transport complex III (ESCRT-III) which is involved in multivesicular bodies (MVBs) formation and sorting of endosomal cargo proteins into MVBs. MVBs contain intraluminal vesicles (ILVs) that are generated by invagination and scission from the limiting membrane of the endosome and mostly are delivered to lysosomes enabling degradation of membrane proteins, such as stimulated growth factor receptors, lysosomal enzymes and lipids. In the ESCRT-III complex, it probably serves as an acceptor for the ESCRT-II complex on endosomal membranes. In Xenopus laevis (African clawed frog), this protein is Charged multivesicular body protein 6-B (chmp6-b).